The chain runs to 2595 residues: Glucosylceramide transporter ABCA12 (2595 aa).

A helical membrane pass occupies residues 23 to 43; the sequence is PLWTLVLILWPVIIFIILAIT. A compositionally biased stretch (basic and acidic residues) spans 109-119; the sequence is LKKPSNPKRDS. The disordered stretch occupies residues 109–143; that stretch reads LKKPSNPKRDSNLSLRSTQVPERSHTSLATVPPRP. Residues Asn-120, Asn-156, Asn-174, Asn-214, Asn-275, Asn-331, Asn-365, Asn-381, Asn-410, Asn-433, Asn-455, Asn-526, Asn-541, Asn-574, Asn-605, Asn-645, Asn-749, Asn-773, Asn-812, Asn-823, Asn-854, Asn-917, and Asn-960 are each glycosylated (N-linked (GlcNAc...) asparagine). Polar residues predominate over residues 120–137; it reads NLSLRSTQVPERSHTSLA. 3 helical membrane passes run 1062–1082, 1109–1129, and 1142–1162; these read VSYS…AAFV, FAWL…LIVI, and FILF…SYLI. N-linked (GlcNAc...) asparagine glycosylation is present at Asn-1167. A run of 3 helical transmembrane segments spans residues 1171-1191, 1197-1217, and 1247-1267; these read IAAL…IVLV, LSYV…SYAS, and FGWL…IAWY. Residue Asn-1319 is glycosylated (N-linked (GlcNAc...) asparagine). The ABC transporter 1 domain maps to 1346–1577; the sequence is VALHGVTKIY…FGDGYHLTLT (232 aa). 1378-1385 provides a ligand contact to ATP; it reads GPNGAGKT. Residues Asn-1524, Asn-1663, Asn-1673, Asn-1686, Asn-1690, and Asn-1704 are each glycosylated (N-linked (GlcNAc...) asparagine). The tract at residues 1672–1703 is disordered; that stretch reads SNMSLEHLTQRKVGNPSANGTSTPDDLSVSSS. The segment covering 1687 to 1703 has biased composition (polar residues); the sequence is PSANGTSTPDDLSVSSS. Residues 1747–1767 form a helical membrane-spanning segment; sequence LIAQVILPIVFVATAMGLGTL. Asn-1819, Asn-1835, Asn-1876, Asn-1921, and Asn-1952 each carry an N-linked (GlcNAc...) asparagine glycan. Transmembrane regions (helical) follow at residues 1979–1999, 2035–2055, 2072–2092, 2103–2123, 2143–2163, 2187–2207, and 2270–2290; these read ATIS…GYSV, FIYD…VIAI, LLLL…AGLF, VCVN…VYFL, IFLI…SQQQ, GAMF…RLLI, and IIAV…GLLG. In terms of domain architecture, ABC transporter 2 spans 2254 to 2489; sequence VQLHRLTKTY…FGRGFTVKVH (236 aa). Residue 2290-2297 participates in ATP binding; the sequence is GVNGAGKT. Residues Asn-2318, Asn-2542, and Asn-2547 are each glycosylated (N-linked (GlcNAc...) asparagine). Positions 2575 to 2587 are enriched in polar residues; that stretch reads VDTSSQGSTISVD. A disordered region spans residues 2575–2595; sequence VDTSSQGSTISVDSQEDQLDS.

It belongs to the ABC transporter superfamily. ABCA family. As to quaternary structure, interacts with NR1H2 and ABCA1; this interaction is required for ABCA1 localization to the cell surface and is necessary for its normal activity and stability. As to expression, expressed in a number of other tissues besides skin, including heart, intestine, stomach, and kidney. Expressed mainly in the granular layer of the skin. Expressed in lung. Expressed in alpha and beta cells of pancreatic islets.

The protein resides in the cytoplasmic vesicle. Its subcellular location is the secretory vesicle membrane. It localises to the golgi apparatus membrane. It carries out the reaction ATP + H2O + phospholipidSide 1 = ADP + phosphate + phospholipidSide 2.. It catalyses the reaction a beta-D-glucosylceramide(in) + ATP + H2O = a beta-D-glucosylceramide(out) + ADP + phosphate + H(+). Transports lipids such as glucosylceramides from the outer to the inner leaflet of lamellar granules (LGs) membrane, whereby the lipids are finally transported to the keratinocyte periphery via the trans-Golgi network and LGs and released to the apical surface of the granular keratinocytes to form lipid lamellae in the stratum corneum of the epidermis, which is essential for skin barrier function. In the meantime, participates in the transport of the lamellar granules-associated proteolytic enzymes, in turn regulates desquamation and keratinocyte differentiation. Furthermore, is essential for the regulation of cellular cholesterol homeostasis by regulating ABCA1-dependent cholesterol efflux from macrophages through interaction with NR1H2 and ABCA1. Plays pleiotropic roles in regulating glucose stimulated insulin secretion from beta cells, regulating the morphology and fusion of insulin granules, lipid raft abundance and the actin cytoskeleton. Also involved in lung surfactant biogenesis. The sequence is that of Glucosylceramide transporter ABCA12 from Mus musculus (Mouse).